Consider the following 309-residue polypeptide: Putative pyridoxal kinase C6F6.11c (309 aa).

Residues Ser-12 and Tyr-123 each contribute to the substrate site. ATP is bound by residues 182 to 183 (SS) and 209 to 221 (LIPV…RGTG). Asp-222 lines the substrate pocket.

The protein belongs to the pyridoxine kinase family. A divalent metal cation serves as cofactor.

It localises to the cytoplasm. Its subcellular location is the nucleus. It carries out the reaction pyridoxal + ATP = pyridoxal 5'-phosphate + ADP + H(+). Its function is as follows. Required for synthesis of pyridoxal-5-phosphate from vitamin B6. This Schizosaccharomyces pombe (strain 972 / ATCC 24843) (Fission yeast) protein is Putative pyridoxal kinase C6F6.11c.